The sequence spans 807 residues: Leucine--tRNA ligase (807 aa).

The 'HIGH' region signature appears at 38–49 (PYPSGSGLHVGH). Positions 579–583 (KMSKS) match the 'KMSKS' region motif. An ATP-binding site is contributed by K582.

The protein belongs to the class-I aminoacyl-tRNA synthetase family.

It is found in the cytoplasm. The enzyme catalyses tRNA(Leu) + L-leucine + ATP = L-leucyl-tRNA(Leu) + AMP + diphosphate. In Mycoplasmopsis pulmonis (strain UAB CTIP) (Mycoplasma pulmonis), this protein is Leucine--tRNA ligase.